Here is a 925-residue protein sequence, read N- to C-terminus: Isoleucine--tRNA ligase (925 aa).

The 'HIGH' region motif lies at 57 to 67 (PYANGDIHMGH). Glu-556 lines the L-isoleucyl-5'-AMP pocket. The short motif at 597 to 601 (KMSKS) is the 'KMSKS' region element. Residue Lys-600 participates in ATP binding. Zn(2+) contacts are provided by Cys-890, Cys-893, Cys-910, and Cys-913.

This sequence belongs to the class-I aminoacyl-tRNA synthetase family. IleS type 1 subfamily. Monomer. The cofactor is Zn(2+).

The protein localises to the cytoplasm. The enzyme catalyses tRNA(Ile) + L-isoleucine + ATP = L-isoleucyl-tRNA(Ile) + AMP + diphosphate. Its function is as follows. Catalyzes the attachment of isoleucine to tRNA(Ile). As IleRS can inadvertently accommodate and process structurally similar amino acids such as valine, to avoid such errors it has two additional distinct tRNA(Ile)-dependent editing activities. One activity is designated as 'pretransfer' editing and involves the hydrolysis of activated Val-AMP. The other activity is designated 'posttransfer' editing and involves deacylation of mischarged Val-tRNA(Ile). The sequence is that of Isoleucine--tRNA ligase from Carboxydothermus hydrogenoformans (strain ATCC BAA-161 / DSM 6008 / Z-2901).